The chain runs to 874 residues: Alanine--tRNA ligase (874 aa).

Residues H563, H567, C665, and H669 each coordinate Zn(2+).

The protein belongs to the class-II aminoacyl-tRNA synthetase family. It depends on Zn(2+) as a cofactor.

The protein localises to the cytoplasm. It carries out the reaction tRNA(Ala) + L-alanine + ATP = L-alanyl-tRNA(Ala) + AMP + diphosphate. Functionally, catalyzes the attachment of alanine to tRNA(Ala) in a two-step reaction: alanine is first activated by ATP to form Ala-AMP and then transferred to the acceptor end of tRNA(Ala). Also edits incorrectly charged Ser-tRNA(Ala) and Gly-tRNA(Ala) via its editing domain. The protein is Alanine--tRNA ligase of Actinobacillus succinogenes (strain ATCC 55618 / DSM 22257 / CCUG 43843 / 130Z).